The sequence spans 225 residues: mRNA-decapping protein D10 (225 aa).

Residues 35 to 218 (AKYPLSVIGI…NVIKYIINAV (184 aa)) form the Nudix hydrolase domain. Positions 116–137 (GKIKDLESITNCLVREIKEELN) match the Nudix box motif. Glutamate 122 is a Mg(2+) binding site. Glutamate 131 acts as the Nucleophile in catalysis. Glutamate 135 is a binding site for Mn(2+). Position 157 (aspartate 157) interacts with Mg(2+).

Belongs to the Nudix hydrolase family. Mg(2+) serves as cofactor. Mn(2+) is required as a cofactor.

Functionally, decapping enzyme required for the removal of the 5'-end m7GpppN cap tethered to viral and host mRNAs to allow their decay in cells. May therefore accelerate viral and cellular mRNA turnover to eliminate competing host mRNAs and allow stage-specific synthesis of viral proteins. Acceleration of the turnover of cellular transcripts may even promote the shutoff of host protein synthesis. The polypeptide is mRNA-decapping protein D10 (Fowlpox virus (strain NVSL) (FPV)).